Here is a 445-residue protein sequence, read N- to C-terminus: Adenylyltransferase and sulfurtransferase MOCS3 (445 aa).

The interval 49–70 (LPPSAAAEVEPTGSPSSSSSAA) is disordered. Residues Gly106, Asp127, 134-138 (DNLHR), Lys151, and 170-171 (NN) each bind ATP. Positions 211 and 214 each coordinate Zn(2+). Residue Cys228 is the Glycyl thioester intermediate; for adenylyltransferase activity of the active site. Zn(2+) contacts are provided by Cys286 and Cys289. Positions 342-443 (SGRPHLLVDV…WAKEVDPSFL (102 aa)) constitute a Rhodanese domain. Catalysis depends on Cys403, which acts as the Cysteine persulfide intermediate; for sulfurtransferase activity.

In the N-terminal section; belongs to the HesA/MoeB/ThiF family. UBA4 subfamily. It depends on Zn(2+) as a cofactor.

The protein resides in the cytoplasm. The protein localises to the cytosol. The catalysed reaction is [molybdopterin-synthase sulfur-carrier protein]-C-terminal Gly-Gly + ATP + H(+) = [molybdopterin-synthase sulfur-carrier protein]-C-terminal Gly-Gly-AMP + diphosphate. It carries out the reaction [molybdopterin-synthase sulfur-carrier protein]-C-terminal Gly-Gly-AMP + S-sulfanyl-L-cysteinyl-[cysteine desulfurase] + AH2 = [molybdopterin-synthase sulfur-carrier protein]-C-terminal-Gly-aminoethanethioate + L-cysteinyl-[cysteine desulfurase] + A + AMP + 2 H(+). The protein operates within tRNA modification; 5-methoxycarbonylmethyl-2-thiouridine-tRNA biosynthesis. It functions in the pathway cofactor biosynthesis; molybdopterin biosynthesis. Plays a central role in 2-thiolation of mcm(5)S(2)U at tRNA wobble positions of cytosolic tRNA(Lys), tRNA(Glu) and tRNA(Gln). Also essential during biosynthesis of the molybdenum cofactor. Acts by mediating the C-terminal thiocarboxylation of sulfur carriers URM1 and MOCS2A. Its N-terminus first activates URM1 and MOCS2A as acyl-adenylates (-COAMP), then the persulfide sulfur on the catalytic cysteine is transferred to URM1 and MOCS2A to form thiocarboxylation (-COSH) of their C-terminus. The reaction probably involves hydrogen sulfide that is generated from the persulfide intermediate and that acts as a nucleophile towards URM1 and MOCS2A. Subsequently, a transient disulfide bond is formed. Does not use thiosulfate as sulfur donor; NFS1 probably acting as a sulfur donor for thiocarboxylation reactions. This is Adenylyltransferase and sulfurtransferase MOCS3 from Oryza sativa subsp. japonica (Rice).